Here is a 301-residue protein sequence, read N- to C-terminus: D-alanine--D-alanine ligase (301 aa).

The 196-residue stretch at 99 to 294 (KCILKAANIR…FPELIDMIID (196 aa)) folds into the ATP-grasp domain. 126 to 181 (IEKMGYPVVVKPTHGGSSVATFIIKEEKDIKDAVIEGFKWDSEVIIEKFIKGDEIT) contributes to the ATP binding site. Mg(2+)-binding residues include aspartate 248, glutamate 261, and asparagine 263.

The protein belongs to the D-alanine--D-alanine ligase family. It depends on Mg(2+) as a cofactor. Mn(2+) is required as a cofactor.

Its subcellular location is the cytoplasm. It carries out the reaction 2 D-alanine + ATP = D-alanyl-D-alanine + ADP + phosphate + H(+). The protein operates within cell wall biogenesis; peptidoglycan biosynthesis. Its function is as follows. Cell wall formation. This chain is D-alanine--D-alanine ligase, found in Clostridium botulinum (strain Alaska E43 / Type E3).